We begin with the raw amino-acid sequence, 302 residues long: Pseudouridine-5'-phosphate glycosidase (302 aa).

Catalysis depends on E25, which acts as the Proton donor. K86 and V106 together coordinate substrate. D138 is a binding site for Mn(2+). Residue 140–142 participates in substrate binding; it reads SAD. K159 serves as the catalytic Nucleophile.

The protein belongs to the pseudouridine-5'-phosphate glycosidase family. As to quaternary structure, homotrimer. Requires Mn(2+) as cofactor.

The enzyme catalyses D-ribose 5-phosphate + uracil = psi-UMP + H2O. Functionally, catalyzes the reversible cleavage of pseudouridine 5'-phosphate (PsiMP) to ribose 5-phosphate and uracil. Functions biologically in the cleavage direction, as part of a pseudouridine degradation pathway. The chain is Pseudouridine-5'-phosphate glycosidase from Jannaschia sp. (strain CCS1).